A 324-amino-acid polypeptide reads, in one-letter code: 2,3,4,5-tetrahydropyridine-2,6-dicarboxylate N-succinyltransferase (324 aa).

Residues Asp-173 and Glu-190 each coordinate Mg(2+). Glu-206 (acyl-anhydride intermediate) is an active-site residue. Succinyl-CoA is bound by residues Arg-208, Gly-223, Ser-226, Ala-249, 264–265 (EA), Gly-272, Lys-284, and 297–300 (RRNS).

It belongs to the type 2 tetrahydrodipicolinate N-succinyltransferase family. Homotrimer.

Its subcellular location is the cytoplasm. It carries out the reaction (S)-2,3,4,5-tetrahydrodipicolinate + succinyl-CoA + H2O = (S)-2-succinylamino-6-oxoheptanedioate + CoA. Its pathway is amino-acid biosynthesis; L-lysine biosynthesis via DAP pathway; LL-2,6-diaminopimelate from (S)-tetrahydrodipicolinate (succinylase route): step 1/3. Functionally, catalyzes the conversion of the cyclic tetrahydrodipicolinate (THDP) into the acyclic N-succinyl-L-2-amino-6-oxopimelate using succinyl-CoA. This is 2,3,4,5-tetrahydropyridine-2,6-dicarboxylate N-succinyltransferase from Geodermatophilus obscurus (strain ATCC 25078 / DSM 43160 / JCM 3152 / CCUG 61914 / KCC A-0152 / KCTC 9177 / NBRC 13315 / NRRL B-3577 / G-20).